An 800-amino-acid polypeptide reads, in one-letter code: Ent-copalyl diphosphate synthase 2, chloroplastic (800 aa).

A chloroplast-targeting transit peptide spans 1 to 47 (MQMQVLTAASSLPRATLLRPAAAEPWRQSFLQLQARPIQRPGIMLHC). Residues 52–80 (QGQETRERRQLDDDEHARPPQGGDDDVAA) form a disordered region. A compositionally biased stretch (basic and acidic residues) spans 55 to 69 (ETRERRQLDDDEHAR). K242 contacts substrate. Positions 374 and 376 each coordinate Mg(2+). The DXDD motif signature appears at 374 to 377 (DIDD). K461 lines the substrate pocket.

The protein belongs to the terpene synthase family. Mg(2+) serves as cofactor.

The protein localises to the plastid. It localises to the chloroplast. The enzyme catalyses (2E,6E,10E)-geranylgeranyl diphosphate = ent-copalyl diphosphate. It participates in secondary metabolite biosynthesis; terpenoid biosynthesis. Catalyzes the conversion of geranylgeranyl diphosphate to the phytoalexin precursor ent-copalyl diphosphate. The polypeptide is Ent-copalyl diphosphate synthase 2, chloroplastic (Oryza sativa subsp. japonica (Rice)).